We begin with the raw amino-acid sequence, 223 residues long: ATP phosphoribosyltransferase (223 aa).

It belongs to the ATP phosphoribosyltransferase family. Short subfamily. Heteromultimer composed of HisG and HisZ subunits.

It localises to the cytoplasm. The enzyme catalyses 1-(5-phospho-beta-D-ribosyl)-ATP + diphosphate = 5-phospho-alpha-D-ribose 1-diphosphate + ATP. The protein operates within amino-acid biosynthesis; L-histidine biosynthesis; L-histidine from 5-phospho-alpha-D-ribose 1-diphosphate: step 1/9. Its function is as follows. Catalyzes the condensation of ATP and 5-phosphoribose 1-diphosphate to form N'-(5'-phosphoribosyl)-ATP (PR-ATP). Has a crucial role in the pathway because the rate of histidine biosynthesis seems to be controlled primarily by regulation of HisG enzymatic activity. The polypeptide is ATP phosphoribosyltransferase (Novosphingobium aromaticivorans (strain ATCC 700278 / DSM 12444 / CCUG 56034 / CIP 105152 / NBRC 16084 / F199)).